The following is a 366-amino-acid chain: Tudor domain-containing protein 10 (366 aa).

The 74-residue stretch at 34 to 107 folds into the RRM domain; the sequence is TEVYVGNLPL…RKLFVNTSKR (74 aa). Residues 210–317 form the Tudor domain; the sequence is FWAMHVTEAL…PLTQPFMLEK (108 aa). Residues 216–237 are a coiled coil; that stretch reads TEALHQNMQALFSTLAQAEEQQ.

The protein is Tudor domain-containing protein 10 (TDRD10) of Homo sapiens (Human).